Reading from the N-terminus, the 210-residue chain is Ras-related protein Rab-2-B (210 aa).

Residue 13-21 (GDTGVGKSC) coordinates GTP. The Effector region motif lies at 35–43 (HDLTIGVEF). Residues 61 to 65 (DTAGQ), 119 to 122 (NKCD), and 149 to 151 (SAK) contribute to the GTP site. S-geranylgeranyl cysteine attachment occurs at residues C208 and C209.

The protein belongs to the small GTPase superfamily. Rab family.

The protein localises to the endoplasmic reticulum membrane. It is found in the golgi apparatus membrane. Its function is as follows. Protein transport. Probably involved in vesicular traffic. This Zea mays (Maize) protein is Ras-related protein Rab-2-B (RAB2B).